A 486-amino-acid polypeptide reads, in one-letter code: E3 ubiquitin-protein ligase TRIM58 (486 aa).

Residues C16–R61 form an RING-type zinc finger. The segment at P91 to L132 adopts a B box-type zinc-finger fold. 4 residues coordinate Zn(2+): C96, H99, C118, and H124. A coiled-coil region spans residues L193–R242. The region spanning L273–I463 is the B30.2/SPRY domain.

The protein belongs to the TRIM/RBCC family. In terms of tissue distribution, expressed in erythroblasts.

It catalyses the reaction S-ubiquitinyl-[E2 ubiquitin-conjugating enzyme]-L-cysteine + [acceptor protein]-L-lysine = [E2 ubiquitin-conjugating enzyme]-L-cysteine + N(6)-ubiquitinyl-[acceptor protein]-L-lysine.. It participates in protein modification; protein ubiquitination. In terms of biological role, E3 ubiquitin ligase induced during late erythropoiesis. Directly binds and ubiquitinates the intermediate chain of the microtubule motor dynein (DYNC1LI1/DYNC1LI2), stimulating the degradation of the dynein holoprotein complex. May participate in the erythroblast enucleation process through regulation of nuclear polarization. This Homo sapiens (Human) protein is E3 ubiquitin-protein ligase TRIM58 (TRIM58).